Consider the following 339-residue polypeptide: Anthranilate phosphoribosyltransferase (339 aa).

5-phospho-alpha-D-ribose 1-diphosphate is bound by residues Gly-81, 84–85 (GD), Ser-89, 91–94 (NVST), 109–117 (KHGNRALSS), and Ala-121. Residue Gly-81 coordinates anthranilate. Ser-93 provides a ligand contact to Mg(2+). Residue Asn-112 participates in anthranilate binding. Arg-167 provides a ligand contact to anthranilate. The Mg(2+) site is built by Asp-226 and Glu-227.

This sequence belongs to the anthranilate phosphoribosyltransferase family. In terms of assembly, homodimer. Mg(2+) is required as a cofactor.

It catalyses the reaction N-(5-phospho-beta-D-ribosyl)anthranilate + diphosphate = 5-phospho-alpha-D-ribose 1-diphosphate + anthranilate. The protein operates within amino-acid biosynthesis; L-tryptophan biosynthesis; L-tryptophan from chorismate: step 2/5. Functionally, catalyzes the transfer of the phosphoribosyl group of 5-phosphorylribose-1-pyrophosphate (PRPP) to anthranilate to yield N-(5'-phosphoribosyl)-anthranilate (PRA). This chain is Anthranilate phosphoribosyltransferase, found in Rhodopseudomonas palustris (strain BisA53).